Reading from the N-terminus, the 302-residue chain is Formylmethanofuran--tetrahydromethanopterin formyltransferase (302 aa).

This sequence belongs to the FTR family. In terms of assembly, homotetramer.

It localises to the cytoplasm. It carries out the reaction N-formylmethanofuran + 5,6,7,8-tetrahydromethanopterin + H(+) = N(5)-formyl-5,6,7,8-tetrahydromethanopterin + methanofuran. Its pathway is one-carbon metabolism; formaldehyde degradation; formate from formaldehyde (H(4)MPT route): step 4/5. In terms of biological role, catalyzes the transfer of a formyl group from 5-formyl tetrahydromethanopterin (5-formyl-H(4)MPT) to methanofuran (MFR) to produce formylmethanofuran (formyl-MFR) and tetrahydromethanopterin (H(4)MPT). The chain is Formylmethanofuran--tetrahydromethanopterin formyltransferase from Methylobacillus flagellatus (strain ATCC 51484 / DSM 6875 / VKM B-1610 / KT).